We begin with the raw amino-acid sequence, 347 residues long: Heme A synthase (347 aa).

8 helical membrane passes run 14–34 (VKIWLCICCIGILIMVFIGGI), 96–116 (FHRLLGRIVGLVFLIPFLYFM), 129–149 (FILIAFLILVQGVMGWYMVKS), 162–182 (LAMHLLLALAIFYLLWKHFLL), 199–219 (VFYIIISLITIQITCGALVAG), 260–280 (FIHEVIALLILIIAVITLLVL), 287–307 (MYLLLALLLIQLTLGILTFIY), and 311–331 (IILASLHQVTAFILFASSIYL). Histidine 262 contributes to the heme binding site. Residue histidine 317 participates in heme binding.

It belongs to the COX15/CtaA family. Type 2 subfamily. As to quaternary structure, interacts with CtaB. Heme b serves as cofactor.

Its subcellular location is the cell membrane. It carries out the reaction Fe(II)-heme o + 2 A + H2O = Fe(II)-heme a + 2 AH2. It participates in porphyrin-containing compound metabolism; heme A biosynthesis; heme A from heme O: step 1/1. Functionally, catalyzes the conversion of heme O to heme A by two successive hydroxylations of the methyl group at C8. The first hydroxylation forms heme I, the second hydroxylation results in an unstable dihydroxymethyl group, which spontaneously dehydrates, resulting in the formyl group of heme A. The sequence is that of Heme A synthase from Ehrlichia ruminantium (strain Gardel).